Consider the following 489-residue polypeptide: Siroheme synthase (489 aa).

A precorrin-2 dehydrogenase /sirohydrochlorin ferrochelatase region spans residues 1-203 (MDFFPVFMRL…GREDAARETL (203 aa)). Residues 22–23 (PV) and 43–44 (PA) each bind NAD(+). A uroporphyrinogen-III C-methyltransferase region spans residues 218 to 489 (GEVFLVGAGP…ARSSTEGAEA (272 aa)). Residue Pro227 coordinates S-adenosyl-L-methionine. Asp250 serves as the catalytic Proton acceptor. Lys272 functions as the Proton donor in the catalytic mechanism. S-adenosyl-L-methionine-binding positions include 303 to 305 (GGD), Ile308, 333 to 334 (TA), Met385, and Gly414.

The protein in the N-terminal section; belongs to the precorrin-2 dehydrogenase / sirohydrochlorin ferrochelatase family. In the C-terminal section; belongs to the precorrin methyltransferase family.

It carries out the reaction uroporphyrinogen III + 2 S-adenosyl-L-methionine = precorrin-2 + 2 S-adenosyl-L-homocysteine + H(+). The enzyme catalyses precorrin-2 + NAD(+) = sirohydrochlorin + NADH + 2 H(+). It catalyses the reaction siroheme + 2 H(+) = sirohydrochlorin + Fe(2+). Its pathway is cofactor biosynthesis; adenosylcobalamin biosynthesis; precorrin-2 from uroporphyrinogen III: step 1/1. It functions in the pathway cofactor biosynthesis; adenosylcobalamin biosynthesis; sirohydrochlorin from precorrin-2: step 1/1. It participates in porphyrin-containing compound metabolism; siroheme biosynthesis; precorrin-2 from uroporphyrinogen III: step 1/1. The protein operates within porphyrin-containing compound metabolism; siroheme biosynthesis; siroheme from sirohydrochlorin: step 1/1. Its pathway is porphyrin-containing compound metabolism; siroheme biosynthesis; sirohydrochlorin from precorrin-2: step 1/1. In terms of biological role, multifunctional enzyme that catalyzes the SAM-dependent methylations of uroporphyrinogen III at position C-2 and C-7 to form precorrin-2 via precorrin-1. Then it catalyzes the NAD-dependent ring dehydrogenation of precorrin-2 to yield sirohydrochlorin. Finally, it catalyzes the ferrochelation of sirohydrochlorin to yield siroheme. The protein is Siroheme synthase of Thioalkalivibrio sulfidiphilus (strain HL-EbGR7).